Here is a 1468-residue protein sequence, read N- to C-terminus: MASGAGGIGGGGGGGKIRTRRCHQGPVKPYQQGRPQHQGILSRVTESVKNIVPGWLQRYFNKSENACSCSVNADEVPRWPENREDEREIYVDENTNTDDGRTTPEPTGSNTEEPSTTSTASNYPDVLTRPSLHRSHLNFSVLESPALHCQPSTSSAFPIGSSGFSLVKEIKDSTSQHDDDNISTTSGFSSRASEKDIAVSKNTSLPPLWSPEAERSHSLSQHTAISSKKPAFNLSAFGTLSTSLGNSSILKTSQLGDSPFYPGKTTYGGAAAAVRQNKVRSTPYQAPVRRQMKAKQLNAQSYGVTSSTARRILQSLEKMSSPLADAKRIPSAVSSPLNSPLDRSGIDSTVFQAKKEKVDSQYPPVQRLMTPKPVSIATNRTVYFKPSLTPSGDLRKTNQRIDKKNSTVDEKNISRQNREQESGFSYPNFSIPAANGLSSGVGGGGGKMRRERTTHFVASKPSEEEEVEVPLLPQISLPISSSSLPTFNFSSPAISAASSSSVSPSQPLSNKVQMTSLGSTGNPVFTFSSPIVKSTQADVLPPASIGFTFSVPLAKTELSGPNSSSETVLSSSVTAQDNTVVNSSSSKKRSAPCEDPFTPAKILREGSVLDILKTPGFMSPKVDSPALQPTTTSSIVYTRPAISTFSSSGVEFGESLKAGSSWQCDTCLLQNKVTDNKCIACQAAKLPLKETAKQTGIGTPSKSDKPASTSGTGFGDKFKPAIGTWDCDTCLVQNKPEAVKCVACETPKPGTGVKRALPLTVASESPVTASSSTTVTTGTLGFGDKFKRPVGSWECPVCCVSNKAEDSRCVSCTSEKPGLVSASSSNSVPVSLPSGGCLGLDKFKKPEGSWDCEVCLVQNKADSTKCIACESAKPGTKSEFKGFGTSSSLNPAPSAFKFGIPSSSSGLSQTFTSTGNFKFGDQGGFKLGTSSDSGSTNTMNTNFKFPKPTGDFKFGVLPDSKPEEIKNDSKNDNFQFGPSSGLSNPASSAPFQFGVSTLGQQEKKEELPQSSSAGFSFGAGVANPSSAAIDTTVTSENKSGFNFGTIDTKSVSVTPFTYKTTEAKKEDASATKGGFTFGKVDSAALSSPSMFVLGRTEEKQQEPVTSTSLVFGKKADNEEPKCQPVFSFGNSEQTKDESSSKPTFSFSVAKPSVKESDQLAKATFAFGNQTNTTTDQGAAKPAFSFLNSSSSSSSTPATSSSASIFGSSTSSSSPPVAAFVFGQASNPVSSSAFGNSAESSTSQPLLFPQDGKPATTSSTASAAPPFVFGTGASSNSTVSSGFTFGATTTSSSSGSFFVFGTGHSAPSASPAFGANQTPTFGQSQGASQPNPPSFGSISSSTALFSAGSQPVPPPTFGTVSSSSQPPVFGQQPSQSAFGSGTANASSVFQFGSSTTNFNFTNNNPSGVFTFGASPSTPAAAAQPSGSGGFSFSQSPASFTVGSNGKNMFSSSGTSVSGRKIKTAVRRKK.

Gly residues predominate over residues 1–16 (MASGAGGIGGGGGGGK). 3 disordered regions span residues 1–39 (MASG…QHQG), 78–128 (RWPE…DVLT), and 172–222 (DSTS…LSQH). N-acetylalanine is present on Ala2. Basic and acidic residues predominate over residues 78–90 (RWPENREDEREIY). A phosphothreonine mark is found at Thr97 and Thr103. Composition is skewed to polar residues over residues 104–122 (PEPT…TASN) and 182–191 (ISTTSGFSSR). Ser183, Ser186, Ser193, Ser204, and Ser210 each carry phosphoserine. The stretch at 237 to 238 (FG) is repeat 1. The 29 X 2 AA repeats of F-G stretch occupies residues 237–1411 (FGTLSTSLGN…NNPSGVFTFG (1175 aa)). A phosphoserine mark is found at Ser241, Ser258, Ser321, Ser331, Ser334, Ser335, Ser339, and Ser344. Residue Lys354 forms a Glycyl lysine isopeptide (Lys-Gly) (interchain with G-Cter in SUMO2) linkage. Thr370 carries the phosphothreonine modification. An N6-acetyllysine modification is found at Lys385. The segment at 387-429 (SLTPSGDLRKTNQRIDKKNSTVDEKNISRQNREQESGFSYPNF) is disordered. A Phosphothreonine modification is found at Thr389. Basic and acidic residues predominate over residues 393 to 421 (DLRKTNQRIDKKNSTVDEKNISRQNREQE). Phosphoserine occurs at positions 500, 516, and 529. O-linked (GlcNAc) serine glycans are attached at residues Ser534 and Ser544. 3 positions are modified to phosphoserine: Ser607, Ser619, and Ser633. Repeat unit 2 spans residues 652-653 (FG). Residues 657–687 (KAGSSWQCDTCLLQNKVTDNKCIACQAAKLP) form a RanBP2-type 1 zinc finger. Zn(2+) contacts are provided by Cys664, Cys667, Cys678, and Cys681. A compositionally biased stretch (polar residues) spans 693 to 711 (KQTGIGTPSKSDKPASTSG). The segment at 693–714 (KQTGIGTPSKSDKPASTSGTGF) is disordered. Repeat unit 3 spans residues 714–715 (FG). At Lys717 the chain carries N6-acetyllysine. The segment at 721–750 (AIGTWDCDTCLVQNKPEAVKCVACETPKPG) adopts a RanBP2-type 2 zinc-finger fold. The Zn(2+) site is built by Cys727, Cys730, Cys741, and Cys744. Repeat unit 4 spans residues 782–783 (FG). RanBP2-type zinc fingers lie at residues 789 to 818 (PVGS…EKPG) and 846 to 875 (PEGS…AKPG). Zn(2+) contacts are provided by Cys795, Cys798, Cys809, Cys812, Cys852, Cys855, Cys866, and Cys869. A Phosphoserine modification is found at Ser886. Copy 5 of the repeat occupies 898 to 899 (FG). Ser902 carries an O-linked (GlcNAc) serine glycan. Residues 919 to 920 (FG) form repeat 6. Position 947 is an N6-acetyllysine (Lys947). Repeat 7 spans residues 954 to 955 (FG). Positions 960–971 (SKPEEIKNDSKN) are enriched in basic and acidic residues. Positions 960-985 (SKPEEIKNDSKNDNFQFGPSSGLSNP) are disordered. Polar residues predominate over residues 972-985 (DNFQFGPSSGLSNP). 4 consecutive repeat copies span residues 976-977 (FG), 993-994 (FG), 1017-1018 (FG), and 1077-1078 (FG). Ser1106 carries O-linked (GlcNAc) serine glycosylation. 18 tandem repeats follow at residues 1111–1112 (FG), 1128–1129 (FG), 1166–1167 (FG), 1205–1206 (FG), 1221–1222 (FG), 1233–1234 (FG), 1268–1269 (FG), 1282–1283 (FT), 1284–1285 (FG), 1299–1300 (FG), 1312–1313 (FG), 1320–1321 (FG), 1334–1335 (FG), 1356–1357 (FG), 1368–1369 (FG), 1377–1378 (FG), 1390–1391 (FG), and 1410–1411 (FG). The segment at 1121–1145 (KCQPVFSFGNSEQTKDESSSKPTFS) is disordered. Residues 1190 to 1209 (SSSSSTPATSSSASIFGSST) are disordered. Residues 1231 to 1242 (SAFGNSAESSTS) show a composition bias toward low complexity. The segment at 1231 to 1260 (SAFGNSAESSTSQPLLFPQDGKPATTSSTA) is disordered. The tract at residues 1308 to 1380 (ASPAFGANQT…QPSQSAFGSG (73 aa)) is disordered. Polar residues-rich tracts occupy residues 1314 to 1348 (ANQT…SAGS) and 1357 to 1380 (GTVS…FGSG). A compositionally biased stretch (low complexity) spans 1414 to 1438 (PSTPAAAAQPSGSGGFSFSQSPASF). A disordered region spans residues 1414–1468 (PSTPAAAAQPSGSGGFSFSQSPASFTVGSNGKNMFSSSGTSVSGRKIKTAVRRKK). A compositionally biased stretch (polar residues) spans 1439–1456 (TVGSNGKNMFSSSGTSVS). Ser1450, Ser1454, and Ser1456 each carry phosphoserine. Residues 1458–1468 (RKIKTAVRRKK) are compositionally biased toward basic residues.

The protein belongs to the NUP153 family. As to quaternary structure, part of the nuclear pore complex (NPC). Interacts with TPR (via coiled coil region); the interaction is direct and provides a link between the core structure and the TPR-containing nuclear basket of the nuclear pore complex (NPC). Interacts with HIKESHI. Interacts with SENP2. Interacts with XPO5. Interacts with RAN; the interaction occurs in a GTP- and GDP-independent manner. Interacts with MCM3AP; this interaction is required for MCM3AP localization at the nuclear pore complex. Interacts with MAPK1. Zn(2+) is required as a cofactor. Post-translationally, phosphorylated in interphase, hyperphosphorylated during mitosis. May play a role in the reversible disassembly of the nuclear pore complex during mitosis. O-glycosylated during cytokinesis at sites identical or close to phosphorylation sites, this interferes with the phosphorylation status.

Its subcellular location is the nucleus. The protein resides in the nucleus membrane. The protein localises to the nuclear pore complex. Its function is as follows. Component of the nuclear pore complex (NPC), a complex required for the trafficking across the nuclear envelope. Functions as a scaffolding element in the nuclear phase of the NPC essential for normal nucleocytoplasmic transport of proteins and mRNAs. Involved in the quality control and retention of unspliced mRNAs in the nucleus; in association with TPR, regulates the nuclear export of unspliced mRNA species bearing constitutive transport element (CTE) in a NXF1- and KHDRBS1-independent manner. Mediates TPR anchoring to the nuclear membrane at NPC. The repeat-containing domain may be involved in anchoring other components of the NPC to the pore membrane. Possible DNA-binding subunit of the nuclear pore complex (NPC). In Rattus norvegicus (Rat), this protein is Nuclear pore complex protein Nup153 (Nup153).